The primary structure comprises 1103 residues: MNHQQQQQQQQKAGEQQLSEPEDMEMEAGDTDDPPRITQNPVINGNVALSDGHSNAEEDMEDDTSWRSEATFQFTVERFSRLSESVLSPPCFVRNLPWKIMVMPRFYPDRPHQKSVGFFLQCNAESDSTSWSCHAQAVLKIINYRDDDKSFSRRISHLFFHKENDWGFSNFMAWSEVTDPEKGFIDDDKVTFEVFVQADAPHGVAWDSKKHTGYVGLKNQGATCYMNSLLQTLFFTNQLRKAVYMMPTEGDDSSKSVPLALQRVFYELQHSDKPVGTKKLTKSFGWETLDSFMQHDVQELCRVLLDNVENKMKGTCVEGTIPKLFRGKMVSYIQCKEVDYRSDRREDYYDIQLSIKGKKNIFESFVDYVAVEQLDGDNKYDAGEHGLQEAEKGVKFLTLPPVLHLQLMRFMYDPQTDQNIKINDRFEFPEQLPLDEFLQKTDPKDPANYILHAVLVHSGDNHGGHYVVYLNPKGDGKWCKFDDDVVSRCTKEEAIEHNYGGHDDDLSVRHCTNAYMLVYIRESKLSEVLQAVTDHDIPQQLVERLQEEKRIEAQKRKERQEAHLYMQVQIVAEDQFCGHQGNDMYDEEKVRYTVFKVLKNSSLAEFVQSLSQTMGFPQDQIRLWPMQARSNGTKRPAMLDNEADGSKTMIELSDNENPWTIFLETVDPELAASGATLPKFDKDHDVMLFLKMYDPKTRSLNYCGHIYTPISCKIRDLLPVMCDRAGFIQDTSLILYEEVKPNLTERIQDYDVSLDKALDELMDGDIIVFQKDDPENDNSELPTAKEYFRDLYHRVDVIFCDKTIPNDPGFVVTLSNRMNYFQVAKTVAQRLNTDPMLLQFFKSQGYRDGPGNPLRHNYEGTLRDLLQFFKPRQPKKLYYQQLKMKITDFENRRSFKCIWLNSQFREEEITLYPDKHGCVRDLLEECKKAVELGDEASGRLRLLEIVSYKIIGVHQEDELLECLSPATSRTFRIEEIPLDQVNIDKENEMLITVAHFHKEVFGTFGIPFLLRIHQGEHFREVMKRIQSLLDIQEKEFEKFKFAIVMMGRHQYINEDEYEVNLKDFEPQPGNMSHPRPWLGLDHFNKAPKRSRYTYLEKAIKIHN.

A compositionally biased stretch (low complexity) spans 1–11 (MNHQQQQQQQQ). Positions 1–40 (MNHQQQQQQQQKAGEQQLSEPEDMEMEAGDTDDPPRITQN) are disordered. The segment at 1 to 209 (MNHQQQQQQQ…APHGVAWDSK (209 aa)) is interaction with TSPYL5. At Ser-19 the chain carries Phosphoserine. Positions 20–32 (EPEDMEMEAGDTD) are enriched in acidic residues. A phosphoserine mark is found at Ser-50 and Ser-54. Residues 54–209 (SNAEEDMEDD…APHGVAWDSK (156 aa)) are interaction with p53/TP53 and MDM2. An MATH domain is found at 69–196 (EATFQFTVER…DDKVTFEVFV (128 aa)). The interval 71–206 (TFQFTVERFS…QADAPHGVAW (136 aa)) is necessary for nuclear localization. One can recognise a USP domain in the interval 215–522 (VGLKNQGATC…NAYMLVYIRE (308 aa)). The active-site Nucleophile is Cys-224. His-465 functions as the Proton acceptor in the catalytic mechanism. Lys-870 carries the N6-acetyllysine; alternate modification. Lys-870 is covalently cross-linked (Glycyl lysine isopeptide (Lys-Gly) (interchain with G-Cter in SUMO2); alternate). A Glycyl lysine isopeptide (Lys-Gly) (interchain with G-Cter in ubiquitin); alternate cross-link involves residue Lys-870. Lys-883 is covalently cross-linked (Glycyl lysine isopeptide (Lys-Gly) (interchain with G-Cter in SUMO2)). Phosphoserine is present on Ser-964. Lys-1085 and Lys-1097 each carry N6-acetyllysine.

It belongs to the peptidase C19 family. As to quaternary structure, monomer. Homodimer. Part of a complex with DAXX, MDM2, RASSF1 and USP7. Part of a complex with DAXX, MDM2 and USP7. Interacts with MDM2; the interaction is independent of p53/TP53. Interacts with DAXX; the interaction is direct and independent of MDM2 and p53/TP53. Component of a complex composed of KMT2E, OGT and USP7; the complex stabilizes KMT2E, preventing KMT2E ubiquitination and proteasomal-mediated degradation. Interacts (via MATH domain) with KMT2E. Interacts with OGT. Interacts with FOXO4; the interaction is enhanced in presence of hydrogen peroxide and occurs independently of p53/TP53. Interacts with p53/TP53; the interaction is enhanced in response to DNA damage; the interaction is impaired by TSPYL5. Interacts with PTEN; the interaction is direct. Interacts with ATXN1 and the strength of interaction is influenced by the length of the poly-Gln region in ATXN1. A weaker interaction seen with mutants having longer poly-Gln regions. Interacts with KIAA1530/UVSSA. Interacts with MEX3C and antagonizes its ability to degrade mRNA. Interacts with DNMT1 and UHRF1. Interacts with FOXP3. Interacts (via MATH domain) with RNF220. Associated component of the Polycomb group (PcG) multiprotein PRC1-like complex. Interacts with EPOP. Interacts with OTUD4 and USP9X; the interaction is direct. Interacts with CRY2. Interacts with REST. Interacts with ERCC6. Part of a complex consisting of USP7, MAGEL2 and TRIM27; directly interacts with MAGEL2; directly interacts with TRIM27. Polyneddylated. In terms of processing, not sumoylated. Post-translationally, ubiquitinated at Lys-870. Polyubiquitinated. As to expression, strongly expressed in the testis, spleen and brain. Weakly expressed in the stomach, small intestine, skeletal muscle and uterus.

Its subcellular location is the nucleus. It is found in the cytoplasm. The protein resides in the PML body. The protein localises to the chromosome. The enzyme catalyses Thiol-dependent hydrolysis of ester, thioester, amide, peptide and isopeptide bonds formed by the C-terminal Gly of ubiquitin (a 76-residue protein attached to proteins as an intracellular targeting signal).. In terms of biological role, hydrolase that deubiquitinates target proteins such as ARMC5, FOXO4, DEPTOR, KAT5, p53/TP53, MDM2, ERCC6, DNMT1, UHRF1, PTEN, KMT2E/MLL5 and DAXX. Together with DAXX, prevents MDM2 self-ubiquitination and enhances the E3 ligase activity of MDM2 towards p53/TP53, thereby promoting p53/TP53 ubiquitination and proteasomal degradation. Deubiquitinates p53/TP53, preventing degradation of p53/TP53, and enhances p53/TP53-dependent transcription regulation, cell growth repression and apoptosis. Deubiquitinates p53/TP53 and MDM2 and strongly stabilizes p53/TP53 even in the presence of excess MDM2, and also induces p53/TP53-dependent cell growth repression and apoptosis. Deubiquitination of FOXO4 in presence of hydrogen peroxide is not dependent on p53/TP53 and inhibits FOXO4-induced transcriptional activity. In association with DAXX, is involved in the deubiquitination and translocation of PTEN from the nucleus to the cytoplasm, both processes that are counteracted by PML. Deubiquitinates KMT2E preventing KMT2E proteasomal-mediated degradation. Involved in cell proliferation during early embryonic development. Involved in transcription-coupled nucleotide excision repair (TC-NER) in response to UV damage: recruited to DNA damage sites following interaction with KIAA1530/UVSSA and promotes deubiquitination of ERCC6, preventing UV-induced degradation of ERCC6. Involved in maintenance of DNA methylation via its interaction with UHRF1 and DNMT1: acts by mediating deubiquitination of UHRF1 and DNMT1, preventing their degradation and promoting DNA methylation by DNMT1. Deubiquitinates alkylation repair enzyme ALKBH3. OTUD4 recruits USP7 and USP9X to stabilize ALKBH3, thereby promoting the repair of alkylated DNA lesions. Acts as a chromatin regulator via its association with the Polycomb group (PcG) multiprotein PRC1-like complex; may act by deubiquitinating components of the PRC1-like complex. Able to mediate deubiquitination of histone H2B; it is however unsure whether this activity takes place in vivo. Exhibits a preference towards 'Lys-48'-linked ubiquitin chains. Increases regulatory T-cells (Treg) suppressive capacity by deubiquitinating and stabilizing transcription factor FOXP3 which is crucial for Treg cell function. Plays a role in the maintenance of the circadian clock periodicity via deubiquitination and stabilization of the CRY1 and CRY2 proteins. Deubiquitinates REST, thereby stabilizing REST and promoting the maintenance of neural progenitor cells. Deubiquitinates SIRT7, inhibiting SIRT7 histone deacetylase activity and regulating gluconeogenesis. Involved in the regulation of WASH-dependent actin polymerization at the surface of endosomes and the regulation of endosomal protein recycling. It maintains optimal WASH complex activity and precise F-actin levels via deubiquitination of TRIM27 and WASHC1. Mediates the deubiquitination of phosphorylated DEPTOR, promoting its stability and leading to decreased mTORC1 signaling. This is Ubiquitin carboxyl-terminal hydrolase 7 (Usp7) from Rattus norvegicus (Rat).